The chain runs to 783 residues: Polyribonucleotide nucleotidyltransferase 1, mitochondrial (783 aa).

Residues 1–45 (MAACRLCCLCPCLRPLGCGPLGRPGRNRALSYLQMRALWSSTGSR) constitute a mitochondrion transit peptide. N6-acetyllysine is present on residues K250, K264, and K285. K552 carries the N6-succinyllysine modification. The KH domain occupies 605-664 (PVVETVKVPLSKRAKFVGPGGYHLKKLQAETGVTISQVDEETFSIFAPTPTAMHEARDFI). The S1 motif domain occupies 679-750 (GAVYTATITE…ADGRMRLSRK (72 aa)). The residue at position 754 (S754) is a Phosphoserine.

This sequence belongs to the polyribonucleotide nucleotidyltransferase family. As to quaternary structure, homotrimer; in free form. Homooligomer. Component of the mitochondrial degradosome (mtEXO) complex which is a heteropentamer containing 2 copies of SUPV3L1 and 3 copies of PNPT1. As part of the mitochondrial degradosome complex, interacts with GRSF1 in an RNA-dependent manner; the interaction enhances the activity of the complex. Interacts with TCL1A; the interaction has no effect on PNPT1 exonuclease activity.

It is found in the cytoplasm. Its subcellular location is the mitochondrion matrix. The protein localises to the mitochondrion intermembrane space. The enzyme catalyses RNA(n+1) + phosphate = RNA(n) + a ribonucleoside 5'-diphosphate. Functionally, RNA-binding protein implicated in numerous RNA metabolic processes. Catalyzes the phosphorolysis of single-stranded polyribonucleotides processively in the 3'-to-5' direction. Mitochondrial intermembrane factor with RNA-processing exoribonulease activity. Component of the mitochondrial degradosome (mtEXO) complex, that degrades 3' overhang double-stranded RNA with a 3'-to-5' directionality in an ATP-dependent manner. Involved in the degradation of non-coding mitochondrial transcripts (MT-ncRNA) and tRNA-like molecules. Required for correct processing and polyadenylation of mitochondrial mRNAs. Plays a role as a cytoplasmic RNA import factor that mediates the translocation of small RNA components, like the 5S RNA, the RNA subunit of ribonuclease P and the mitochondrial RNA-processing (MRP) RNA, into the mitochondrial matrix. Plays a role in mitochondrial morphogenesis and respiration; regulates the expression of the electron transport chain (ETC) components at the mRNA and protein levels. In the cytoplasm, shows a 3'-to-5' exoribonuclease mediating mRNA degradation activity; degrades c-myc mRNA upon treatment with IFNB1/IFN-beta, resulting in a growth arrest in melanoma cells. Regulates the stability of specific mature miRNAs in melanoma cells; specifically and selectively degrades miR-221, preferentially. Also plays a role in RNA cell surveillance by cleaning up oxidized RNAs. Binds to the RNA subunit of ribonuclease P, MRP RNA and miR-221 microRNA. The sequence is that of Polyribonucleotide nucleotidyltransferase 1, mitochondrial (Pnpt1) from Mus musculus (Mouse).